Here is a 302-residue protein sequence, read N- to C-terminus: Sulfate adenylyltransferase subunit 2 (302 aa).

It belongs to the PAPS reductase family. CysD subfamily. As to quaternary structure, heterodimer composed of CysD, the smaller subunit, and CysN.

It catalyses the reaction sulfate + ATP + H(+) = adenosine 5'-phosphosulfate + diphosphate. The protein operates within sulfur metabolism; hydrogen sulfide biosynthesis; sulfite from sulfate: step 1/3. Functionally, with CysN forms the ATP sulfurylase (ATPS) that catalyzes the adenylation of sulfate producing adenosine 5'-phosphosulfate (APS) and diphosphate, the first enzymatic step in sulfur assimilation pathway. APS synthesis involves the formation of a high-energy phosphoric-sulfuric acid anhydride bond driven by GTP hydrolysis by CysN coupled to ATP hydrolysis by CysD. This is Sulfate adenylyltransferase subunit 2 from Xanthomonas axonopodis pv. citri (strain 306).